The sequence spans 247 residues: 5'-nucleotidase SurE (247 aa).

4 residues coordinate a divalent metal cation: Asp-8, Asp-9, Ser-39, and Asn-91.

It belongs to the SurE nucleotidase family. The cofactor is a divalent metal cation.

The protein resides in the cytoplasm. It catalyses the reaction a ribonucleoside 5'-phosphate + H2O = a ribonucleoside + phosphate. Its function is as follows. Nucleotidase that shows phosphatase activity on nucleoside 5'-monophosphates. In Methylobacillus flagellatus (strain ATCC 51484 / DSM 6875 / VKM B-1610 / KT), this protein is 5'-nucleotidase SurE.